Here is a 527-residue protein sequence, read N- to C-terminus: Bifunctional purine biosynthesis protein PurH (527 aa).

The MGS-like domain occupies Asn9 to Val156.

Belongs to the PurH family.

It carries out the reaction (6R)-10-formyltetrahydrofolate + 5-amino-1-(5-phospho-beta-D-ribosyl)imidazole-4-carboxamide = 5-formamido-1-(5-phospho-D-ribosyl)imidazole-4-carboxamide + (6S)-5,6,7,8-tetrahydrofolate. The catalysed reaction is IMP + H2O = 5-formamido-1-(5-phospho-D-ribosyl)imidazole-4-carboxamide. The protein operates within purine metabolism; IMP biosynthesis via de novo pathway; 5-formamido-1-(5-phospho-D-ribosyl)imidazole-4-carboxamide from 5-amino-1-(5-phospho-D-ribosyl)imidazole-4-carboxamide (10-formyl THF route): step 1/1. Its pathway is purine metabolism; IMP biosynthesis via de novo pathway; IMP from 5-formamido-1-(5-phospho-D-ribosyl)imidazole-4-carboxamide: step 1/1. This chain is Bifunctional purine biosynthesis protein PurH, found in Mycolicibacterium paratuberculosis (strain ATCC BAA-968 / K-10) (Mycobacterium paratuberculosis).